The sequence spans 610 residues: E-selectin (610 aa).

A signal peptide spans 1 to 21; sequence MIASQFLSALTLVLLIKESGA. The region spanning 22 to 138 is the C-type lectin domain; it reads WSYSASTTNM…CNKKKLALCY (117 aa). Topologically, residues 22–555 are extracellular; sequence WSYSASTTNM…CEATAKSNIP (534 aa). Asn-30 carries an N-linked (GlcNAc...) asparagine glycan. Cystine bridges form between Cys-40–Cys-137, Cys-110–Cys-129, Cys-142–Cys-153, Cys-147–Cys-162, Cys-164–Cys-173, Cys-179–Cys-223, Cys-192–Cys-205, Cys-209–Cys-236, Cys-241–Cys-285, Cys-254–Cys-267, Cys-271–Cys-298, Cys-303–Cys-348, Cys-334–Cys-361, Cys-366–Cys-411, Cys-397–Cys-424, Cys-429–Cys-474, Cys-460–Cys-487, Cys-492–Cys-533, and Cys-519–Cys-546. Ca(2+)-binding residues include Glu-101, Asn-103, and Glu-108. A carbohydrate is bound by residues 101-108, 112-117, and 125-127; these read EPNNKQNE, EIYIKR, and NDE. Positions 125 and 126 each coordinate Ca(2+). The EGF-like domain occupies 139-174; that stretch reads TAACTHTSCSGHGECVETINNYTCQCHPGFTGLRCE. Asn-159 carries an N-linked (GlcNAc...) asparagine glycan. 6 Sushi domains span residues 177 to 238, 239 to 300, 314 to 363, 365 to 426, 428 to 489, and 490 to 548; these read VTCQ…ACHV, VECD…TCKA, VNCS…VCKA, QCKA…TCEA, RCDA…SCQV, and VQCA…TCEA. Residues Asn-198 and Asn-202 are each glycosylated (N-linked (GlcNAc...) asparagine). Asn-264 carries an N-linked (GlcNAc...) asparagine glycan. Asn-315, Asn-327, and Asn-331 each carry an N-linked (GlcNAc...) asparagine glycan. The N-linked (GlcNAc...) asparagine glycan is linked to Asn-526. The helical transmembrane segment at 556–577 threads the bilayer; that stretch reads LTVGLSAAGTSLLTLASFLFWL. The Cytoplasmic portion of the chain corresponds to 578-610; the sequence is LKRLRRKAKKFVPASSYQSLQSDGSYQMPSESA.

This sequence belongs to the selectin/LECAM family. As to quaternary structure, interacts with SELPLG/PSGL1 and PODXL2 through the sialyl Lewis X epitope. SELPLG sulfation appears not to be required for this interaction.

It is found in the cell membrane. In terms of biological role, cell-surface glycoprotein having a role in immunoadhesion. Mediates in the adhesion of blood neutrophils in cytokine-activated endothelium through interaction with SELPLG/PSGL1. May have a role in capillary morphogenesis. This is E-selectin (SELE) from Equus caballus (Horse).